The sequence spans 130 residues: Small ribosomal subunit protein uS11 (130 aa).

Belongs to the universal ribosomal protein uS11 family. Part of the 30S ribosomal subunit. Interacts with proteins S7 and S18. Binds to IF-3.

Located on the platform of the 30S subunit, it bridges several disparate RNA helices of the 16S rRNA. Forms part of the Shine-Dalgarno cleft in the 70S ribosome. This chain is Small ribosomal subunit protein uS11, found in Shewanella sediminis (strain HAW-EB3).